The primary structure comprises 423 residues: ATP-dependent RNA helicase RhlB (423 aa).

The short motif at 9–37 (LRFSDLPLHHQVLAALQEKGFDYCTPIQA) is the Q motif element. The Helicase ATP-binding domain maps to 40–217 (LPMSLAGKDV…FEDMNDPEYV (178 aa)). Position 53–60 (53–60 (AQTGTGKT)) interacts with ATP. Residues 163–166 (DEAD) carry the DEAD box motif. The 148-residue stretch at 241-388 (KMALLLTLLE…VSQYDVAALL (148 aa)) folds into the Helicase C-terminal domain. The interval 397–423 (KRGNNNSKNSANSNRTFQKKRSLKRNF) is disordered. The span at 400 to 410 (NNNSKNSANSN) shows a compositional bias: low complexity. Positions 413–423 (FQKKRSLKRNF) are enriched in basic residues.

It belongs to the DEAD box helicase family. RhlB subfamily. As to quaternary structure, component of the RNA degradosome, which is a multiprotein complex involved in RNA processing and mRNA degradation.

It localises to the cytoplasm. The enzyme catalyses ATP + H2O = ADP + phosphate + H(+). Functionally, DEAD-box RNA helicase involved in RNA degradation. Has RNA-dependent ATPase activity and unwinds double-stranded RNA. The protein is ATP-dependent RNA helicase RhlB of Pasteurella multocida (strain Pm70).